The primary structure comprises 24 residues: Grammistin Pp 4b (24 aa).

Exists as aggregates of 3-4 molecules. As to expression, expressed by the skin glands.

It localises to the secreted. Thanks to its abundant amphiphilic alpha-helices, it may integrate into membrane phospholipids, leading to lysis of the membrane. Its hemolytic activity is inhibited by phospholipids, but not by cholesterol. Has antibacterial activity with a broad spectrum against various species of bacteria including both Gram-positive and Gram-negative groups. Also has ichthyotoxic activity. This is Grammistin Pp 4b from Pogonoperca punctata (Clown grouper).